Reading from the N-terminus, the 323-residue chain is DNA-directed RNA polymerase subunit alpha (323 aa).

Residues Met1–Asn225 form an alpha N-terminal domain (alpha-NTD) region. The interval Ile246–Gly323 is alpha C-terminal domain (alpha-CTD).

This sequence belongs to the RNA polymerase alpha chain family. Homodimer. The RNAP catalytic core consists of 2 alpha, 1 beta, 1 beta' and 1 omega subunit. When a sigma factor is associated with the core the holoenzyme is formed, which can initiate transcription.

The catalysed reaction is RNA(n) + a ribonucleoside 5'-triphosphate = RNA(n+1) + diphosphate. Functionally, DNA-dependent RNA polymerase catalyzes the transcription of DNA into RNA using the four ribonucleoside triphosphates as substrates. The chain is DNA-directed RNA polymerase subunit alpha from Roseiflexus sp. (strain RS-1).